Here is a 62-residue protein sequence, read N- to C-terminus: UPF0434 protein BP2767 (62 aa).

Belongs to the UPF0434 family.

This chain is UPF0434 protein BP2767, found in Bordetella pertussis (strain Tohama I / ATCC BAA-589 / NCTC 13251).